The sequence spans 117 residues: Basic phospholipase A2 pseudexin B chain (117 aa).

7 disulfides stabilise this stretch: cysteine 11-cysteine 71, cysteine 27-cysteine 117, cysteine 29-cysteine 45, cysteine 44-cysteine 98, cysteine 51-cysteine 91, cysteine 60-cysteine 84, and cysteine 78-cysteine 89. Ca(2+) contacts are provided by tyrosine 28, glycine 30, and glycine 32. Histidine 48 is a catalytic residue. Residue aspartate 49 participates in Ca(2+) binding. Residue aspartate 92 is part of the active site.

Belongs to the phospholipase A2 family. Group I subfamily. D49 sub-subfamily. It depends on Ca(2+) as a cofactor. Expressed by the venom gland.

It localises to the secreted. It catalyses the reaction a 1,2-diacyl-sn-glycero-3-phosphocholine + H2O = a 1-acyl-sn-glycero-3-phosphocholine + a fatty acid + H(+). In terms of biological role, PLA2 catalyzes the calcium-dependent hydrolysis of the 2-acyl groups in 3-sn-phosphoglycerides. The chain is Basic phospholipase A2 pseudexin B chain from Pseudechis porphyriacus (Red-bellied black snake).